Reading from the N-terminus, the 161-residue chain is Large ribosomal subunit protein bL9 (161 aa).

Belongs to the bacterial ribosomal protein bL9 family.

Functionally, binds to the 23S rRNA. The polypeptide is Large ribosomal subunit protein bL9 (Protochlamydia amoebophila (strain UWE25)).